Reading from the N-terminus, the 800-residue chain is DNA topoisomerase 4 subunit A (800 aa).

A Topo IIA-type catalytic domain is found at 31–495; it reads LPDVRDGLKP…EIEEIKIDKE (465 aa). The active-site O-(5'-phospho-DNA)-tyrosine intermediate is the tyrosine 119.

This sequence belongs to the type II topoisomerase GyrA/ParC subunit family. ParC type 2 subfamily. As to quaternary structure, heterotetramer composed of ParC and ParE.

It localises to the cell membrane. It carries out the reaction ATP-dependent breakage, passage and rejoining of double-stranded DNA.. Functionally, topoisomerase IV is essential for chromosome segregation. It relaxes supercoiled DNA. Performs the decatenation events required during the replication of a circular DNA molecule. This chain is DNA topoisomerase 4 subunit A, found in Staphylococcus aureus (strain N315).